The chain runs to 91 residues: Sec-independent protein translocase protein TatAt (91 aa).

The chain crosses the membrane as a helical span at residues 9 to 29 (FPGLPGGPELLVVLLIVVLLF). Positions 48–91 (FQRGREEIEDELQDMTGDDDEDDATSESSADSVSTDSVSTESSN) are disordered. Positions 54-72 (EIEDELQDMTGDDDEDDAT) are enriched in acidic residues. Low complexity predominate over residues 73–91 (SESSADSVSTDSVSTESSN).

Belongs to the TatA/E family. Forms a complex with TatC. Cytoplasmic and membrane-bound TatA form high-molecular-weight complexes.

It is found in the cell membrane. It localises to the cytoplasm. Its function is as follows. Part of the twin-arginine translocation (Tat) system that transports large folded proteins containing a characteristic twin-arginine motif in their signal peptide across membranes. TatA could form the protein-conducting channel of the Tat system. The chain is Sec-independent protein translocase protein TatAt from Haloferax volcanii (strain ATCC 29605 / DSM 3757 / JCM 8879 / NBRC 14742 / NCIMB 2012 / VKM B-1768 / DS2) (Halobacterium volcanii).